Reading from the N-terminus, the 420-residue chain is UDP-N-acetylglucosamine 1-carboxyvinyltransferase 2 (420 aa).

Phosphoenolpyruvate is bound at residue 22–23; sequence KN. Arg-92 is a binding site for UDP-N-acetyl-alpha-D-glucosamine. The Proton donor role is filled by Cys-116. Residue Cys-116 is modified to 2-(S-cysteinyl)pyruvic acid O-phosphothioketal. UDP-N-acetyl-alpha-D-glucosamine-binding positions include 121–125, Asp-307, and Ile-329; that span reads RPIDL.

This sequence belongs to the EPSP synthase family. MurA subfamily.

The protein resides in the cytoplasm. The catalysed reaction is phosphoenolpyruvate + UDP-N-acetyl-alpha-D-glucosamine = UDP-N-acetyl-3-O-(1-carboxyvinyl)-alpha-D-glucosamine + phosphate. Its pathway is cell wall biogenesis; peptidoglycan biosynthesis. Functionally, cell wall formation. Adds enolpyruvyl to UDP-N-acetylglucosamine. The sequence is that of UDP-N-acetylglucosamine 1-carboxyvinyltransferase 2 from Streptococcus thermophilus (strain CNRZ 1066).